The primary structure comprises 178 residues: ATP synthase subunit delta (178 aa).

Belongs to the ATPase delta chain family. In terms of assembly, F-type ATPases have 2 components, F(1) - the catalytic core - and F(0) - the membrane proton channel. F(1) has five subunits: alpha(3), beta(3), gamma(1), delta(1), epsilon(1). F(0) has three main subunits: a(1), b(2) and c(10-14). The alpha and beta chains form an alternating ring which encloses part of the gamma chain. F(1) is attached to F(0) by a central stalk formed by the gamma and epsilon chains, while a peripheral stalk is formed by the delta and b chains.

The protein localises to the cell inner membrane. F(1)F(0) ATP synthase produces ATP from ADP in the presence of a proton or sodium gradient. F-type ATPases consist of two structural domains, F(1) containing the extramembraneous catalytic core and F(0) containing the membrane proton channel, linked together by a central stalk and a peripheral stalk. During catalysis, ATP synthesis in the catalytic domain of F(1) is coupled via a rotary mechanism of the central stalk subunits to proton translocation. In terms of biological role, this protein is part of the stalk that links CF(0) to CF(1). It either transmits conformational changes from CF(0) to CF(1) or is implicated in proton conduction. This Marinobacter nauticus (strain ATCC 700491 / DSM 11845 / VT8) (Marinobacter aquaeolei) protein is ATP synthase subunit delta.